The chain runs to 356 residues: Protein pelota homolog (356 aa).

Belongs to the eukaryotic release factor 1 family. Pelota subfamily. Monomer. A divalent metal cation serves as cofactor.

It is found in the cytoplasm. Functionally, may function in recognizing stalled ribosomes, interact with stem-loop structures in stalled mRNA molecules, and effect endonucleolytic cleavage of the mRNA. May play a role in the release non-functional ribosomes and degradation of damaged mRNAs. Has endoribonuclease activity. This chain is Protein pelota homolog, found in Staphylothermus marinus (strain ATCC 43588 / DSM 3639 / JCM 9404 / F1).